Consider the following 860-residue polypeptide: Leucine--tRNA ligase (860 aa).

The 'HIGH' region signature appears at 42–52 (PYPSGRLHMGH). The 'KMSKS' region signature appears at 619 to 623 (KMSKS). Residue Lys622 coordinates ATP.

Belongs to the class-I aminoacyl-tRNA synthetase family.

The protein resides in the cytoplasm. It carries out the reaction tRNA(Leu) + L-leucine + ATP = L-leucyl-tRNA(Leu) + AMP + diphosphate. In Escherichia coli O81 (strain ED1a), this protein is Leucine--tRNA ligase.